Reading from the N-terminus, the 339-residue chain is EEIG family member 2 (339 aa).

The C2 NT-type domain maps to 1–111 (MRLLDGGSFT…ILKVLISMQL (111 aa)). Ser197 is modified (phosphoserine). The interval 226 to 262 (TEPITAEPSPDPTAAAATATTTTAKEEEASEKLARCP) is disordered. Positions 230–248 (TAEPSPDPTAAAATATTTT) are enriched in low complexity. Positions 249–259 (AKEEEASEKLA) are enriched in basic and acidic residues. Ser255, Ser267, Ser299, Ser300, and Ser329 each carry phosphoserine.

The protein belongs to the EEIG family. Expressed in bone marrow-derived macrophages.

In Mus musculus (Mouse), this protein is EEIG family member 2 (Eeig2).